Consider the following 228-residue polypeptide: MTSKRTVSDSKRAFFAAYPRPVNSIYRRVIDELLVEVHLLITNQDFRHDPLFATGLLTAYQALMEGYTPVEQRDAILRALCTALELSYEQLHTDAAQWRAIAAELPAQEVLEVMAGKREAGDGRLKAMGDTLAGIANAERFKYSRLFSLGLANILEQAGRAAAMSEKDRLERLQQICTYLKLDYNRVKRDLDFFHSVLERIKRSKEVVDELSQTERRKREERAVSQPG.

A coiled-coil region spans residues 201 to 223; it reads IKRSKEVVDELSQTERRKREERA. The tract at residues 209–228 is disordered; sequence DELSQTERRKREERAVSQPG.

The protein belongs to the THF1 family.

Its function is as follows. May be involved in photosynthetic membrane biogenesis. The protein is Protein Thf1 of Gloeobacter violaceus (strain ATCC 29082 / PCC 7421).